The primary structure comprises 290 residues: Eukaryotic translation initiation factor 3 subunit G (290 aa).

The segment at 1–34 is disordered; that stretch reads MSRLGNRAADWADDEEFDDPSALPAQQVTTNKDG. One can recognise an RRM domain in the interval 210–288; it reads ATLRVTNVSE…LILRVEFAKR (79 aa).

Belongs to the eIF-3 subunit G family. In terms of assembly, component of the eukaryotic translation initiation factor 3 (eIF-3) complex.

It localises to the cytoplasm. Functionally, RNA-binding component of the eukaryotic translation initiation factor 3 (eIF-3) complex, which is involved in protein synthesis of a specialized repertoire of mRNAs and, together with other initiation factors, stimulates binding of mRNA and methionyl-tRNAi to the 40S ribosome. The eIF-3 complex specifically targets and initiates translation of a subset of mRNAs involved in cell proliferation. This subunit can bind 18S rRNA. The polypeptide is Eukaryotic translation initiation factor 3 subunit G (Neosartorya fischeri (strain ATCC 1020 / DSM 3700 / CBS 544.65 / FGSC A1164 / JCM 1740 / NRRL 181 / WB 181) (Aspergillus fischerianus)).